We begin with the raw amino-acid sequence, 483 residues long: Regulatory protein ViaA (483 aa).

Belongs to the ViaA family. In terms of assembly, homodimer. Interacts with RavA.

It localises to the cytoplasm. Functionally, component of the RavA-ViaA chaperone complex, which may act on the membrane to optimize the function of some of the respiratory chains. ViaA stimulates the ATPase activity of RavA. The chain is Regulatory protein ViaA from Salmonella choleraesuis (strain SC-B67).